The sequence spans 282 residues: Nucleotide-binding protein in ptsN-ptsO intergenic region (282 aa).

Residue 8 to 15 (GRSGSGKS) participates in ATP binding. 56–59 (DVRN) contributes to the GTP binding site.

It belongs to the RapZ-like family.

In terms of biological role, displays ATPase and GTPase activities. The chain is Nucleotide-binding protein in ptsN-ptsO intergenic region from Shewanella violacea.